The following is a 438-amino-acid chain: 3-phosphoshikimate 1-carboxyvinyltransferase (438 aa).

3-phosphoshikimate-binding residues include lysine 26, serine 27, and arginine 31. Lysine 26 lines the phosphoenolpyruvate pocket. Phosphoenolpyruvate-binding residues include glycine 99 and arginine 127. Residues serine 172, glutamine 174, aspartate 320, and lysine 347 each coordinate 3-phosphoshikimate. Position 174 (glutamine 174) interacts with phosphoenolpyruvate. Residue aspartate 320 is the Proton acceptor of the active site. 2 residues coordinate phosphoenolpyruvate: arginine 351 and arginine 392.

Belongs to the EPSP synthase family. As to quaternary structure, monomer.

The protein resides in the cytoplasm. It catalyses the reaction 3-phosphoshikimate + phosphoenolpyruvate = 5-O-(1-carboxyvinyl)-3-phosphoshikimate + phosphate. It functions in the pathway metabolic intermediate biosynthesis; chorismate biosynthesis; chorismate from D-erythrose 4-phosphate and phosphoenolpyruvate: step 6/7. Its function is as follows. Catalyzes the transfer of the enolpyruvyl moiety of phosphoenolpyruvate (PEP) to the 5-hydroxyl of shikimate-3-phosphate (S3P) to produce enolpyruvyl shikimate-3-phosphate and inorganic phosphate. The protein is 3-phosphoshikimate 1-carboxyvinyltransferase of Xanthomonas campestris pv. campestris (strain 8004).